We begin with the raw amino-acid sequence, 267 residues long: Endonuclease NucS (267 aa).

It belongs to the NucS endonuclease family.

Its subcellular location is the cytoplasm. Cleaves both 3' and 5' ssDNA extremities of branched DNA structures. In Pyrococcus furiosus (strain ATCC 43587 / DSM 3638 / JCM 8422 / Vc1), this protein is Endonuclease NucS.